The following is a 59-amino-acid chain: MDHRLLEIVACPVCKGKLTFDKENQELICKLDRLAYPIKEGIPVLLEPEARSMGMDEGR.

It belongs to the UPF0434 family.

The protein is UPF0434 protein VV1_2087 of Vibrio vulnificus (strain CMCP6).